The primary structure comprises 246 residues: 2-aminoethylphosphonate cytidylyltransferase (246 aa).

Residues Ala19, Gly20, Lys34, Ser97, Glu114, and Ala115 each coordinate CMP-(2-aminoethyl)phosphonate. Mg(2+) contacts are provided by Asp116 and Asp145. The CMP-(2-aminoethyl)phosphonate site is built by Asp145, Lys161, and Asp202. 2 residues coordinate Mg(2+): Glu226 and Asp228.

Belongs to the LicC/PntC cytidylyltransferase family. Monomer. Requires Mg(2+) as cofactor.

The enzyme catalyses (2-aminoethyl)phosphonate + CTP = CMP-(2-aminoethyl)phosphonate + diphosphate. Its pathway is phosphorus metabolism; phosphonate biosynthesis. Its function is as follows. Cytidylyltransferase involved in the biosynthesis of cell-surface phosphonates. Catalyzes the activation of 2-aminoethylphosphonate (AEP) to CMP-2-aminoethylphosphonate (CMP-AEP). Can also use phosphocholine, with much lower efficiency. Exhibits strong activity towards CTP, limited activity towards ATP and no activity with GTP. The protein is 2-aminoethylphosphonate cytidylyltransferase of Lancefieldella rimae (strain ATCC 49626 / DSM 7090 / CCUG 31168 / NBRC 15546 / VPI D140H-11A) (Atopobium rimae).